A 171-amino-acid polypeptide reads, in one-letter code: 3-hydroxydecanoyl-[acyl-carrier-protein] dehydratase (171 aa).

The active site involves H70.

It belongs to the thioester dehydratase family. FabA subfamily. In terms of assembly, homodimer.

It is found in the cytoplasm. The catalysed reaction is a (3R)-hydroxyacyl-[ACP] = a (2E)-enoyl-[ACP] + H2O. It catalyses the reaction (3R)-hydroxydecanoyl-[ACP] = (2E)-decenoyl-[ACP] + H2O. The enzyme catalyses (2E)-decenoyl-[ACP] = (3Z)-decenoyl-[ACP]. It functions in the pathway lipid metabolism; fatty acid biosynthesis. Its function is as follows. Necessary for the introduction of cis unsaturation into fatty acids. Catalyzes the dehydration of (3R)-3-hydroxydecanoyl-ACP to E-(2)-decenoyl-ACP and then its isomerization to Z-(3)-decenoyl-ACP. Can catalyze the dehydratase reaction for beta-hydroxyacyl-ACPs with saturated chain lengths up to 16:0, being most active on intermediate chain length. The polypeptide is 3-hydroxydecanoyl-[acyl-carrier-protein] dehydratase (Photobacterium profundum (strain SS9)).